The primary structure comprises 65 residues: Alpha-toxin Bot1 (65 aa).

The region spanning 2–64 is the LCN-type CS-alpha/beta domain; the sequence is RDAYIAQPEN…VPIRIPGKCH (63 aa). Disulfide bonds link Cys12-Cys63, Cys16-Cys36, Cys22-Cys46, and Cys26-Cys48. Phe65 carries the phenylalanine amide modification.

The protein belongs to the long (4 C-C) scorpion toxin superfamily. Sodium channel inhibitor family. Alpha subfamily. In terms of tissue distribution, expressed by the venom gland.

The protein resides in the secreted. Functionally, alpha toxins bind voltage-independently at site-3 of sodium channels (Nav) and inhibit the inactivation of the activated channels, thereby blocking neuronal transmission. This is Alpha-toxin Bot1 from Buthus occitanus tunetanus (Common European scorpion).